A 207-amino-acid chain; its full sequence is MISYIKGELAEILPDVIVVEANGIGYNIYVPGSVPGELPSVGSEVKIYTYMNVKEDECSLFGFLTRDDLSMFKMLICVNGIGPKAALGALSNITADDLRFAVLADDVAAIKALPGIGPKTAQKIIIELKDKLKLDEVFESALSKNKKADNNSNVSNVMMIRNDAVEALVSLGYSSKDALVAVKEVEDIENKDSETVLKEALKKLVKF.

Residues 1–64 (MISYIKGELA…EDECSLFGFL (64 aa)) are domain I. Residues 65-143 (TRDDLSMFKM…LDEVFESALS (79 aa)) form a domain II region. The segment at 144 to 155 (KNKKADNNSNVS) is flexible linker. The interval 156–207 (NVMMIRNDAVEALVSLGYSSKDALVAVKEVEDIENKDSETVLKEALKKLVKF) is domain III.

Belongs to the RuvA family. Homotetramer. Forms an RuvA(8)-RuvB(12)-Holliday junction (HJ) complex. HJ DNA is sandwiched between 2 RuvA tetramers; dsDNA enters through RuvA and exits via RuvB. An RuvB hexamer assembles on each DNA strand where it exits the tetramer. Each RuvB hexamer is contacted by two RuvA subunits (via domain III) on 2 adjacent RuvB subunits; this complex drives branch migration. In the full resolvosome a probable DNA-RuvA(4)-RuvB(12)-RuvC(2) complex forms which resolves the HJ.

It is found in the cytoplasm. Its function is as follows. The RuvA-RuvB-RuvC complex processes Holliday junction (HJ) DNA during genetic recombination and DNA repair, while the RuvA-RuvB complex plays an important role in the rescue of blocked DNA replication forks via replication fork reversal (RFR). RuvA specifically binds to HJ cruciform DNA, conferring on it an open structure. The RuvB hexamer acts as an ATP-dependent pump, pulling dsDNA into and through the RuvAB complex. HJ branch migration allows RuvC to scan DNA until it finds its consensus sequence, where it cleaves and resolves the cruciform DNA. This Lachnospira eligens (strain ATCC 27750 / DSM 3376 / VPI C15-48 / C15-B4) (Eubacterium eligens) protein is Holliday junction branch migration complex subunit RuvA.